The sequence spans 122 residues: Large ribosomal subunit protein uL14 (122 aa).

This sequence belongs to the universal ribosomal protein uL14 family. Part of the 50S ribosomal subunit. Forms a cluster with proteins L3 and L19. In the 70S ribosome, L14 and L19 interact and together make contacts with the 16S rRNA in bridges B5 and B8.

Its function is as follows. Binds to 23S rRNA. Forms part of two intersubunit bridges in the 70S ribosome. The protein is Large ribosomal subunit protein uL14 of Lactobacillus acidophilus (strain ATCC 700396 / NCK56 / N2 / NCFM).